Here is a 453-residue protein sequence, read N- to C-terminus: Probable glycine dehydrogenase (decarboxylating) subunit 1 (453 aa).

It belongs to the GcvP family. N-terminal subunit subfamily. In terms of assembly, the glycine cleavage system is composed of four proteins: P, T, L and H. In this organism, the P 'protein' is a heterodimer of two subunits.

The catalysed reaction is N(6)-[(R)-lipoyl]-L-lysyl-[glycine-cleavage complex H protein] + glycine + H(+) = N(6)-[(R)-S(8)-aminomethyldihydrolipoyl]-L-lysyl-[glycine-cleavage complex H protein] + CO2. In terms of biological role, the glycine cleavage system catalyzes the degradation of glycine. The P protein binds the alpha-amino group of glycine through its pyridoxal phosphate cofactor; CO(2) is released and the remaining methylamine moiety is then transferred to the lipoamide cofactor of the H protein. The chain is Probable glycine dehydrogenase (decarboxylating) subunit 1 from Caulobacter sp. (strain K31).